The following is a 270-amino-acid chain: Glutamate racemase (270 aa).

Substrate is bound by residues Asp-10 to Ser-11 and Tyr-42 to Gly-43. The Proton donor/acceptor role is filled by Cys-74. Residue Asn-75 to Thr-76 coordinates substrate. Catalysis depends on Cys-189, which acts as the Proton donor/acceptor. Thr-190–His-191 is a binding site for substrate.

Belongs to the aspartate/glutamate racemases family.

It catalyses the reaction L-glutamate = D-glutamate. Its pathway is cell wall biogenesis; peptidoglycan biosynthesis. Its function is as follows. Provides the (R)-glutamate required for cell wall biosynthesis. This Bartonella quintana (strain Toulouse) (Rochalimaea quintana) protein is Glutamate racemase.